The chain runs to 520 residues: Apolipoprotein N-acyltransferase (520 aa).

The next 7 helical transmembrane spans lie at 12-32 (IFTY…FSPF), 33-53 (DYWG…KTAE), 58-78 (LWSA…WVHV), 93-113 (VLVL…AYLI), 122-142 (AMFP…FTGF), 168-188 (VTFF…VLLI), and 193-213 (WNVV…SAYS). Residues 232 to 479 (AQGNIEQNLK…ETTLTHKVAA (248 aa)) enclose the CN hydrolase domain. The active-site Proton acceptor is Glu272. Residue Lys338 is part of the active site. Cys390 functions as the Nucleophile in the catalytic mechanism. The chain crosses the membrane as a helical span at residues 484–504 (TPYAVFGNTAIYGLSLLLLLM).

This sequence belongs to the CN hydrolase family. Apolipoprotein N-acyltransferase subfamily.

It localises to the cell inner membrane. It carries out the reaction N-terminal S-1,2-diacyl-sn-glyceryl-L-cysteinyl-[lipoprotein] + a glycerophospholipid = N-acyl-S-1,2-diacyl-sn-glyceryl-L-cysteinyl-[lipoprotein] + a 2-acyl-sn-glycero-3-phospholipid + H(+). It functions in the pathway protein modification; lipoprotein biosynthesis (N-acyl transfer). Its function is as follows. Catalyzes the phospholipid dependent N-acylation of the N-terminal cysteine of apolipoprotein, the last step in lipoprotein maturation. This chain is Apolipoprotein N-acyltransferase, found in Pasteurella multocida (strain Pm70).